The primary structure comprises 147 residues: D-aminoacyl-tRNA deacylase (147 aa).

A Gly-cisPro motif, important for rejection of L-amino acids motif is present at residues 137–138; it reads GP.

The protein belongs to the DTD family. Homodimer.

It localises to the cytoplasm. It carries out the reaction glycyl-tRNA(Ala) + H2O = tRNA(Ala) + glycine + H(+). The enzyme catalyses a D-aminoacyl-tRNA + H2O = a tRNA + a D-alpha-amino acid + H(+). An aminoacyl-tRNA editing enzyme that deacylates mischarged D-aminoacyl-tRNAs. Also deacylates mischarged glycyl-tRNA(Ala), protecting cells against glycine mischarging by AlaRS. Acts via tRNA-based rather than protein-based catalysis; rejects L-amino acids rather than detecting D-amino acids in the active site. By recycling D-aminoacyl-tRNA to D-amino acids and free tRNA molecules, this enzyme counteracts the toxicity associated with the formation of D-aminoacyl-tRNA entities in vivo and helps enforce protein L-homochirality. The sequence is that of D-aminoacyl-tRNA deacylase from Jannaschia sp. (strain CCS1).